A 333-amino-acid polypeptide reads, in one-letter code: tRNA-modifying protein YgfZ (333 aa).

2 residues coordinate folate: Trp33 and Trp195.

Belongs to the tRNA-modifying YgfZ family.

It localises to the cytoplasm. Functionally, folate-binding protein involved in regulating the level of ATP-DnaA and in the modification of some tRNAs. It is probably a key factor in regulatory networks that act via tRNA modification, such as initiation of chromosomal replication. This chain is tRNA-modifying protein YgfZ, found in Pectobacterium carotovorum subsp. carotovorum (strain PC1).